Reading from the N-terminus, the 285-residue chain is 2-dehydro-3-deoxyphosphooctonate aldolase (285 aa).

It belongs to the KdsA family.

Its subcellular location is the cytoplasm. The enzyme catalyses D-arabinose 5-phosphate + phosphoenolpyruvate + H2O = 3-deoxy-alpha-D-manno-2-octulosonate-8-phosphate + phosphate. The protein operates within carbohydrate biosynthesis; 3-deoxy-D-manno-octulosonate biosynthesis; 3-deoxy-D-manno-octulosonate from D-ribulose 5-phosphate: step 2/3. Its pathway is bacterial outer membrane biogenesis; lipopolysaccharide biosynthesis. The polypeptide is 2-dehydro-3-deoxyphosphooctonate aldolase (Polaromonas sp. (strain JS666 / ATCC BAA-500)).